The sequence spans 335 residues: Ketol-acid reductoisomerase (NADP(+)) (335 aa).

A KARI N-terminal Rossmann domain is found at A2–T182. NADP(+) is bound by residues Y25 to Q28, R48, S51, S53, and D83 to Q86. H108 is an active-site residue. G134 provides a ligand contact to NADP(+). Residues T183–L328 form the KARI C-terminal knotted domain. Mg(2+)-binding residues include D191, E195, E227, and E231. S252 is a binding site for substrate.

Belongs to the ketol-acid reductoisomerase family. It depends on Mg(2+) as a cofactor.

It carries out the reaction (2R)-2,3-dihydroxy-3-methylbutanoate + NADP(+) = (2S)-2-acetolactate + NADPH + H(+). The enzyme catalyses (2R,3R)-2,3-dihydroxy-3-methylpentanoate + NADP(+) = (S)-2-ethyl-2-hydroxy-3-oxobutanoate + NADPH + H(+). It participates in amino-acid biosynthesis; L-isoleucine biosynthesis; L-isoleucine from 2-oxobutanoate: step 2/4. It functions in the pathway amino-acid biosynthesis; L-valine biosynthesis; L-valine from pyruvate: step 2/4. Functionally, involved in the biosynthesis of branched-chain amino acids (BCAA). Catalyzes an alkyl-migration followed by a ketol-acid reduction of (S)-2-acetolactate (S2AL) to yield (R)-2,3-dihydroxy-isovalerate. In the isomerase reaction, S2AL is rearranged via a Mg-dependent methyl migration to produce 3-hydroxy-3-methyl-2-ketobutyrate (HMKB). In the reductase reaction, this 2-ketoacid undergoes a metal-dependent reduction by NADPH to yield (R)-2,3-dihydroxy-isovalerate. In Methanosarcina barkeri (strain Fusaro / DSM 804), this protein is Ketol-acid reductoisomerase (NADP(+)).